The primary structure comprises 297 residues: GTPase Era (297 aa).

The region spanning 5 to 173 (RAGFVSFVGR…TTELMRLLPV (169 aa)) is the Era-type G domain. The G1 stretch occupies residues 13–20 (GRPNVGKS). Residue 13 to 20 (GRPNVGKS) participates in GTP binding. The segment at 39–43 (QTTRR) is G2. The tract at residues 60–63 (DTPG) is G3. GTP contacts are provided by residues 60 to 64 (DTPGV) and 123 to 126 (TKID). Residues 123 to 126 (TKID) form a G4 region. A G5 region spans residues 152–154 (VSA). The KH type-2 domain occupies 205 to 283 (VEDELPHSLA…FLSIRVKVAK (79 aa)).

This sequence belongs to the TRAFAC class TrmE-Era-EngA-EngB-Septin-like GTPase superfamily. Era GTPase family. In terms of assembly, monomer.

The protein resides in the cytoplasm. It localises to the cell membrane. An essential GTPase that binds both GDP and GTP, with rapid nucleotide exchange. Plays a role in 16S rRNA processing and 30S ribosomal subunit biogenesis and possibly also in cell cycle regulation and energy metabolism. The polypeptide is GTPase Era (Leifsonia xyli subsp. xyli (strain CTCB07)).